The following is a 172-amino-acid chain: RNA pyrophosphohydrolase (172 aa).

The Nudix hydrolase domain maps to 6-149 (GFRANVGIII…KRDVYRKVMK (144 aa)). Positions 38–59 (GGLDDGESVEEAMYRELYEEVG) match the Nudix box motif.

The protein belongs to the Nudix hydrolase family. RppH subfamily. It depends on a divalent metal cation as a cofactor.

Functionally, accelerates the degradation of transcripts by removing pyrophosphate from the 5'-end of triphosphorylated RNA, leading to a more labile monophosphorylated state that can stimulate subsequent ribonuclease cleavage. The protein is RNA pyrophosphohydrolase of Shewanella frigidimarina (strain NCIMB 400).